We begin with the raw amino-acid sequence, 163 residues long: uncharacterized protein (163 aa).

A helical transmembrane segment spans residues 7-23; that stretch reads TLVAFIATFFNLAATSI.

It localises to the membrane. This is an uncharacterized protein from Saccharomyces cerevisiae (strain ATCC 204508 / S288c) (Baker's yeast).